The following is a 101-amino-acid chain: Small ribosomal subunit protein uS14 (101 aa).

This sequence belongs to the universal ribosomal protein uS14 family. Part of the 30S ribosomal subunit. Contacts proteins S3 and S10.

In terms of biological role, binds 16S rRNA, required for the assembly of 30S particles and may also be responsible for determining the conformation of the 16S rRNA at the A site. This chain is Small ribosomal subunit protein uS14, found in Sodalis glossinidius (strain morsitans).